A 524-amino-acid chain; its full sequence is Cytochrome P450 4F1 (524 aa).

Residues 15–35 (VAFPWQTLLLFGASWILAQIL) traverse the membrane as a helical segment. Residues glutamate 328 and cysteine 468 each contribute to the heme site.

This sequence belongs to the cytochrome P450 family. Requires heme as cofactor. As to expression, expressed in liver.

It localises to the endoplasmic reticulum membrane. Its subcellular location is the microsome membrane. The catalysed reaction is (5Z,8Z,11Z,14Z)-eicosatetraenoate + reduced [NADPH--hemoprotein reductase] + O2 = 20-hydroxy-(5Z,8Z,11Z,14Z)-eicosatetraenoate + oxidized [NADPH--hemoprotein reductase] + H2O + H(+). The enzyme catalyses 5-hydroxy-(6E,8Z,11Z,14Z)-eicosatetraenoate + reduced [NADPH--hemoprotein reductase] + O2 = 5,20-dihydroxy-(6E,8Z,11Z,14Z)-eicosatetraenoate + oxidized [NADPH--hemoprotein reductase] + H2O + H(+). It carries out the reaction 8-hydroxy-(5Z,9E,11Z,14Z)-eicosatetraenoate + reduced [NADPH--hemoprotein reductase] + O2 = 8,20-dihydroxy-(5Z,9E,11Z,14Z)-eicosatetraenoate + oxidized [NADPH--hemoprotein reductase] + H2O + H(+). It catalyses the reaction leukotriene B4 + reduced [NADPH--hemoprotein reductase] + O2 = 20-hydroxy-leukotriene B4 + oxidized [NADPH--hemoprotein reductase] + H2O + H(+). The catalysed reaction is 6-trans-leukotriene B4 + reduced [NADPH--hemoprotein reductase] + O2 = 20-hydroxy-6-trans-leukotriene B4 + oxidized [NADPH--hemoprotein reductase] + H2O + H(+). The enzyme catalyses lipoxin A4 + reduced [NADPH--hemoprotein reductase] + O2 = 20-hydroxy-lipoxin A4 + oxidized [NADPH--hemoprotein reductase] + H2O + H(+). Its function is as follows. A cytochrome P450 monooxygenase involved in the metabolism of arachidonic acid and its oxygenated derivatives. Mechanistically, uses molecular oxygen inserting one oxygen atom into a substrate, and reducing the second into a water molecule, with two electrons provided by NADPH via cytochrome P450 reductase (CPR; NADPH-ferrihemoprotein reductase). Participates in the conversion of arachidonic acid to omega-hydroxyeicosatetraenoic acid (20-HETE), a signaling molecule acting both as vasoconstrictive and natriuretic with overall effect on arterial blood pressure. May play a role in the oxidative inactivation of eicosanoids, including both pro-inflammatory and anti-inflammatory mediators such as leukotriene B4 (LTB4), lipoxin A4 (LXA4), and several HETEs. The protein is Cytochrome P450 4F1 of Rattus norvegicus (Rat).